Reading from the N-terminus, the 403-residue chain is Imidazolonepropionase (403 aa).

Histidine 68 and histidine 70 together coordinate Fe(3+). Zn(2+)-binding residues include histidine 68 and histidine 70. Arginine 77, tyrosine 140, and histidine 173 together coordinate 4-imidazolone-5-propanoate. Position 140 (tyrosine 140) interacts with N-formimidoyl-L-glutamate. Histidine 238 contributes to the Fe(3+) binding site. Position 238 (histidine 238) interacts with Zn(2+). Glutamine 241 serves as a coordination point for 4-imidazolone-5-propanoate. Residue aspartate 313 participates in Fe(3+) binding. Aspartate 313 contributes to the Zn(2+) binding site. N-formimidoyl-L-glutamate contacts are provided by asparagine 315 and glycine 317. Serine 318 contacts 4-imidazolone-5-propanoate.

It belongs to the metallo-dependent hydrolases superfamily. HutI family. Zn(2+) serves as cofactor. Requires Fe(3+) as cofactor.

Its subcellular location is the cytoplasm. The enzyme catalyses 4-imidazolone-5-propanoate + H2O = N-formimidoyl-L-glutamate. It participates in amino-acid degradation; L-histidine degradation into L-glutamate; N-formimidoyl-L-glutamate from L-histidine: step 3/3. Functionally, catalyzes the hydrolytic cleavage of the carbon-nitrogen bond in imidazolone-5-propanoate to yield N-formimidoyl-L-glutamate. It is the third step in the universal histidine degradation pathway. In Hahella chejuensis (strain KCTC 2396), this protein is Imidazolonepropionase.